Here is a 63-residue protein sequence, read N- to C-terminus: Cytochrome c oxidase subunit 5C-1 (63 aa).

Residues 15–34 (SEVKELIIGSVLGLAAGGLW) form a helical membrane-spanning segment.

The protein belongs to the cytochrome c oxidase subunit 5C family.

The protein resides in the mitochondrion inner membrane. This protein is one of the nuclear-coded polypeptide chains of cytochrome c oxidase, the terminal oxidase in mitochondrial electron transport. The chain is Cytochrome c oxidase subunit 5C-1 (COX5C1) from Helianthus annuus (Common sunflower).